Here is a 446-residue protein sequence, read N- to C-terminus: Histidinol dehydrogenase homolog (446 aa).

A Zn(2+)-binding site is contributed by His-266. Active-site proton acceptor residues include Glu-334 and His-335. His-427 provides a ligand contact to Zn(2+).

This sequence belongs to the histidinol dehydrogenase family. Requires Zn(2+) as cofactor.

The protein is Histidinol dehydrogenase homolog of Colwellia psychrerythraea (strain 34H / ATCC BAA-681) (Vibrio psychroerythus).